We begin with the raw amino-acid sequence, 234 residues long: Ribonuclease 3 (234 aa).

In terms of domain architecture, RNase III spans 6–134 (RKSLEERVGH…IVGALYLDGG (129 aa)). Glu47 contacts Mg(2+). Asp51 is an active-site residue. Mg(2+)-binding residues include Ser120 and Glu123. Glu123 is an active-site residue. The DRBM domain maps to 162 to 231 (DYKTRLQELV…AKNALEMKYK (70 aa)).

It belongs to the ribonuclease III family. In terms of assembly, homodimer. Mg(2+) is required as a cofactor.

The protein localises to the cytoplasm. It carries out the reaction Endonucleolytic cleavage to 5'-phosphomonoester.. Digests double-stranded RNA. Involved in the processing of primary rRNA transcript to yield the immediate precursors to the large and small rRNAs (23S and 16S). Processes some mRNAs, and tRNAs when they are encoded in the rRNA operon. Processes pre-crRNA and tracrRNA of type II CRISPR loci if present in the organism. The protein is Ribonuclease 3 of Bdellovibrio bacteriovorus (strain ATCC 15356 / DSM 50701 / NCIMB 9529 / HD100).